The chain runs to 309 residues: Glutaminase (309 aa).

Residues Ser64, Asn114, Glu160, Asn167, Tyr191, Tyr243, and Val261 each coordinate substrate.

The protein belongs to the glutaminase family. Homotetramer.

The catalysed reaction is L-glutamine + H2O = L-glutamate + NH4(+). The chain is Glutaminase from Methylorubrum extorquens (strain CM4 / NCIMB 13688) (Methylobacterium extorquens).